We begin with the raw amino-acid sequence, 351 residues long: Glycerol-1-phosphate dehydrogenase [NAD(P)+] (351 aa).

NAD(+) is bound by residues 97–101 (GTVID) and 119–122 (TSPS). Residue Asp-124 participates in substrate binding. Ser-128 is a binding site for NAD(+). Asp-171 contributes to the substrate binding site. Residues Asp-171 and His-251 each contribute to the Zn(2+) site. His-255 provides a ligand contact to substrate. His-267 provides a ligand contact to Zn(2+).

The protein belongs to the glycerol-1-phosphate dehydrogenase family. Homodimer. Requires Zn(2+) as cofactor.

Its subcellular location is the cytoplasm. It catalyses the reaction sn-glycerol 1-phosphate + NAD(+) = dihydroxyacetone phosphate + NADH + H(+). It carries out the reaction sn-glycerol 1-phosphate + NADP(+) = dihydroxyacetone phosphate + NADPH + H(+). The protein operates within membrane lipid metabolism; glycerophospholipid metabolism. Functionally, catalyzes the NAD(P)H-dependent reduction of dihydroxyacetonephosphate (DHAP or glycerone phosphate) to glycerol 1-phosphate (G1P). The G1P thus generated is used as the glycerophosphate backbone of phospholipids in the cellular membranes of Archaea. In Sulfolobus acidocaldarius (strain ATCC 33909 / DSM 639 / JCM 8929 / NBRC 15157 / NCIMB 11770), this protein is Glycerol-1-phosphate dehydrogenase [NAD(P)+].